A 722-amino-acid chain; its full sequence is G2-specific protein kinase fin1 (722 aa).

Residues tyrosine 4 to leucine 281 enclose the Protein kinase domain. ATP-binding positions include isoleucine 10–isoleucine 18 and lysine 33. Aspartate 151 (proton acceptor) is an active-site residue. The disordered stretch occupies residues leucine 528–lysine 557. A compositionally biased stretch (polar residues) spans threonine 535–proline 546.

It belongs to the protein kinase superfamily. Ser/Thr protein kinase family. NIMA subfamily.

Its subcellular location is the cytoplasm. It is found in the cytoskeleton. It localises to the microtubule organizing center. The protein localises to the spindle pole body. It carries out the reaction L-seryl-[protein] + ATP = O-phospho-L-seryl-[protein] + ADP + H(+). It catalyses the reaction L-threonyl-[protein] + ATP = O-phospho-L-threonyl-[protein] + ADP + H(+). Functionally, promotes chromosome condensation and nuclear envelope dynamics during mitosis. Activity appears at metaphase-anaphase transition. The protein is G2-specific protein kinase fin1 (fin1) of Schizosaccharomyces pombe (strain 972 / ATCC 24843) (Fission yeast).